Reading from the N-terminus, the 195-residue chain is Envelope glycoprotein L (195 aa).

The N-terminal stretch at 1 to 25 (MKIYRVLVHLSFVLGMFTKTNTVLA) is a signal peptide. Residues 28–157 (KYDLVHGFMR…LIAPADISCY (130 aa)) form an interaction with gH region. The gL alphaherpesvirus-type domain occupies 28–195 (KYDLVHGFMR…TTSGSRRANA (168 aa)). Disulfide bonds link C49–C78 and C156–C178.

The protein belongs to the herpesviridae glycoprotein L (gL) family. Alphaherpesvirinae gL subfamily. Interacts with glycoprotein H (gH); this interaction is necessary for the correct processing and cell surface expression of gH. The heterodimer gH/gL seems to interact with gB trimers during fusion.

The protein resides in the virion membrane. It localises to the host cell membrane. The protein localises to the host Golgi apparatus. Its subcellular location is the host trans-Golgi network. Its function is as follows. The heterodimer glycoprotein H-glycoprotein L is required for the fusion of viral and plasma membranes leading to virus entry into the host cell. Acts as a functional inhibitor of gH and maintains gH in an inhibited form. Upon binding to host integrins, gL dissociates from gH leading to activation of the viral fusion glycoproteins gB and gH. This chain is Envelope glycoprotein L, found in Gallus gallus (Chicken).